The primary structure comprises 206 residues: Small ribosomal subunit protein uS4 (206 aa).

Residues 96 to 158 (GRLDNVVYRM…AKQQSRIKAA (63 aa)) enclose the S4 RNA-binding domain.

Belongs to the universal ribosomal protein uS4 family. Part of the 30S ribosomal subunit. Contacts protein S5. The interaction surface between S4 and S5 is involved in control of translational fidelity.

Its function is as follows. One of the primary rRNA binding proteins, it binds directly to 16S rRNA where it nucleates assembly of the body of the 30S subunit. With S5 and S12 plays an important role in translational accuracy. The chain is Small ribosomal subunit protein uS4 from Vibrio atlanticus (strain LGP32) (Vibrio splendidus (strain Mel32)).